The chain runs to 249 residues: 5'-nucleotidase SurE (249 aa).

A divalent metal cation-binding residues include Asp-9, Asp-10, Ser-40, and Asn-92.

The protein belongs to the SurE nucleotidase family. Requires a divalent metal cation as cofactor.

The protein localises to the cytoplasm. It carries out the reaction a ribonucleoside 5'-phosphate + H2O = a ribonucleoside + phosphate. Its function is as follows. Nucleotidase that shows phosphatase activity on nucleoside 5'-monophosphates. The polypeptide is 5'-nucleotidase SurE (Shewanella sediminis (strain HAW-EB3)).